The chain runs to 265 residues: Glutamate racemase (265 aa).

Residues 9–10 (DS) and 41–42 (YG) contribute to the substrate site. The active-site Proton donor/acceptor is Cys73. A substrate-binding site is contributed by 74–75 (NT). The active-site Proton donor/acceptor is the Cys180. 181-182 (TH) contacts substrate.

The protein belongs to the aspartate/glutamate racemases family.

It carries out the reaction L-glutamate = D-glutamate. It functions in the pathway cell wall biogenesis; peptidoglycan biosynthesis. Functionally, provides the (R)-glutamate required for cell wall biosynthesis. The sequence is that of Glutamate racemase from Aliivibrio salmonicida (strain LFI1238) (Vibrio salmonicida (strain LFI1238)).